Consider the following 225-residue polypeptide: Uridylate kinase (225 aa).

ATP is bound at residue 9-10 (GS). Gly44 lines the UMP pocket. ATP-binding residues include Gly45 and Arg49. Residues Asp66 and 114-120 (THPGHTT) each bind UMP. Positions 140, 141, 146, and 149 each coordinate ATP.

It belongs to the UMP kinase family. In terms of assembly, homohexamer.

It localises to the cytoplasm. The catalysed reaction is UMP + ATP = UDP + ADP. It participates in pyrimidine metabolism; CTP biosynthesis via de novo pathway; UDP from UMP (UMPK route): step 1/1. With respect to regulation, inhibited by UTP. Catalyzes the reversible phosphorylation of UMP to UDP. This is Uridylate kinase from Pyrococcus abyssi (strain GE5 / Orsay).